Here is a 759-residue protein sequence, read N- to C-terminus: NADP-dependent malic enzyme (759 aa).

The tract at residues 1–428 (MDDQLKQSAL…KLTEFVYKTN (428 aa)) is malic enzyme. Tyr39 (proton donor) is an active-site residue. An N6-acetyllysine modification is found at Lys56. Lys94 acts as the Proton acceptor in catalysis. A divalent metal cation contacts are provided by Glu136, Asp137, and Asp162. Residues 195 to 198 (AGAA), Asn288, and Asn320 contribute to the NADP(+) site. Positions 429–759 (LFMKPIFSQA…AVVEAQTQPL (331 aa)) are phosphate acetyltransferase; required for oligomerization, inhibition by acetyl-CoA and activation by glutamate, aspartate, and glucose-6-phosphate.

It in the N-terminal section; belongs to the malic enzymes family. This sequence in the C-terminal section; belongs to the phosphate acetyltransferase and butyryltransferase family. In terms of assembly, homooligomer, possibly an octamer. Requires Mg(2+) as cofactor. Mn(2+) serves as cofactor.

It carries out the reaction (S)-malate + NADP(+) = pyruvate + CO2 + NADPH. The catalysed reaction is oxaloacetate + H(+) = pyruvate + CO2. Inhibited by 4 mM Mg(2+) and acetyl-CoA, competitively inhibited by fumarate and oxaloacetate. Activated by glutamate and aspartate, glucose-6-phosphate, acetyl-phosphate and 2 mM KCl. Functionally, catalyzes the decarboxylation of malate to pyruvate. In vitro, shows malolactic enzyme activity in the presence of NADPH. However, it is unlikely that this activity is of relevance in E.coli, which produces little NADPH. This Escherichia coli (strain K12) protein is NADP-dependent malic enzyme (maeB).